Consider the following 547-residue polypeptide: Cilia- and flagella- associated protein 210 (547 aa).

Coiled coils occupy residues 50–131, 183–251, and 342–405; these read ERIR…RKKA, VKLN…MKKN, and IARD…KADK. The interval 214–237 is disordered; that stretch reads KQIEEHKEEEEARKKSEEKDAEEM.

As to quaternary structure, microtubule inner protein component of sperm flagellar doublet microtubules.

The protein localises to the cytoplasm. Its subcellular location is the cytoskeleton. It localises to the cilium axoneme. The protein resides in the flagellum axoneme. In terms of biological role, microtubule inner protein (MIP) part of the dynein-decorated doublet microtubules (DMTs) in cilia axoneme, which is required for motile cilia beating. The polypeptide is Cilia- and flagella- associated protein 210 (Cfap210) (Mus musculus (Mouse)).